A 575-amino-acid chain; its full sequence is Electron transfer flavoprotein-ubiquinone oxidoreductase, mitochondrial (575 aa).

The transit peptide at 1-33 (MQRVLRAAAAGIGHASGHRAPRWGAAAAAARWL) directs the protein to the mitochondrion. 44–58 (VVVVGAGPAGLAAAI) provides a ligand contact to FAD. An intramembrane segment occupies 82–103 (VGAHVLSGNVFEPRALDELIPK). 2 residues coordinate a ubiquinone: glycine 276 and glycine 277. An intramembrane segment occupies 343 to 363 (IPNPVFPGGAIIGCSAGFLNV). Residues cysteine 520, cysteine 544, cysteine 547, and cysteine 550 each coordinate [4Fe-4S] cluster. Residues 535–564 (QKLHINAQNCLHCKACDIKDPKQNIEWTVP) enclose the 4Fe-4S ferredoxin-type domain.

This sequence belongs to the ETF-QO/FixC family. The cofactor is [4Fe-4S] cluster. FAD serves as cofactor.

The protein resides in the mitochondrion inner membrane. It catalyses the reaction a ubiquinone + reduced [electron-transfer flavoprotein] = a ubiquinol + oxidized [electron-transfer flavoprotein] + H(+). Its function is as follows. Accepts electrons from ETF and reduces ubiquinone. This chain is Electron transfer flavoprotein-ubiquinone oxidoreductase, mitochondrial, found in Oryza sativa subsp. japonica (Rice).